A 376-amino-acid chain; its full sequence is Chaperone protein DnaJ (376 aa).

A J domain is found at 5–70 (DYYEILGVSK…QKRAAYDQYG (66 aa)). The segment at 131 to 209 (GVTKEIRIPT…CHGHGRVERS (79 aa)) adopts a CR-type zinc-finger fold. Residues Cys-144, Cys-147, Cys-161, Cys-164, Cys-183, Cys-186, Cys-197, and Cys-200 each coordinate Zn(2+). CXXCXGXG motif repeat units follow at residues 144–151 (CDVCHGSG), 161–168 (CPTCHGSG), 183–190 (CPHCQGRG), and 197–204 (CNKCHGHG).

It belongs to the DnaJ family. In terms of assembly, homodimer. Requires Zn(2+) as cofactor.

The protein localises to the cytoplasm. Its function is as follows. Participates actively in the response to hyperosmotic and heat shock by preventing the aggregation of stress-denatured proteins and by disaggregating proteins, also in an autonomous, DnaK-independent fashion. Unfolded proteins bind initially to DnaJ; upon interaction with the DnaJ-bound protein, DnaK hydrolyzes its bound ATP, resulting in the formation of a stable complex. GrpE releases ADP from DnaK; ATP binding to DnaK triggers the release of the substrate protein, thus completing the reaction cycle. Several rounds of ATP-dependent interactions between DnaJ, DnaK and GrpE are required for fully efficient folding. Also involved, together with DnaK and GrpE, in the DNA replication of plasmids through activation of initiation proteins. The chain is Chaperone protein DnaJ from Shigella flexneri serotype 5b (strain 8401).